Here is a 206-residue protein sequence, read N- to C-terminus: Large ribosomal subunit protein uL4 (206 aa).

The disordered stretch occupies residues 51 to 96 (LTRAEVKHSTKKPFRQKGTGNARAGMTSTPNRRGGGRAFPNKPDEN).

This sequence belongs to the universal ribosomal protein uL4 family. As to quaternary structure, part of the 50S ribosomal subunit.

Its function is as follows. One of the primary rRNA binding proteins, this protein initially binds near the 5'-end of the 23S rRNA. It is important during the early stages of 50S assembly. It makes multiple contacts with different domains of the 23S rRNA in the assembled 50S subunit and ribosome. Functionally, forms part of the polypeptide exit tunnel. This is Large ribosomal subunit protein uL4 from Chromobacterium violaceum (strain ATCC 12472 / DSM 30191 / JCM 1249 / CCUG 213 / NBRC 12614 / NCIMB 9131 / NCTC 9757 / MK).